The sequence spans 389 residues: Endonuclease 8-like 1 (389 aa).

The active-site Schiff-base intermediate with DNA is Pro2. Glu3 (proton donor) is an active-site residue. The active-site Proton donor; for beta-elimination activity is Lys54. Asn176 provides a ligand contact to DNA. The tract at residues 278–389 (TIWFQGDPGP…PREAGESSAS (112 aa)) is disordered. Basic residues predominate over residues 322 to 333 (SRMRRARKHPPK). Residues 336-351 (AQQSEGAGLQQNQETP) show a composition bias toward polar residues. Over residues 357–373 (GKRRGQRASTGHRRRPK) the composition is skewed to basic residues. Residues 374 to 389 (TIPDTRPREAGESSAS) show a composition bias toward basic and acidic residues.

Belongs to the FPG family. As to expression, detected in heart, spleen and lung.

The protein localises to the cytoplasm. It is found in the cytoskeleton. The protein resides in the microtubule organizing center. Its subcellular location is the centrosome. It localises to the nucleus. The protein localises to the chromosome. It carries out the reaction 2'-deoxyribonucleotide-(2'-deoxyribose 5'-phosphate)-2'-deoxyribonucleotide-DNA = a 3'-end 2'-deoxyribonucleotide-(2,3-dehydro-2,3-deoxyribose 5'-phosphate)-DNA + a 5'-end 5'-phospho-2'-deoxyribonucleoside-DNA + H(+). Involved in base excision repair of DNA damaged by oxidation or by mutagenic agents. Acts as a DNA glycosylase that recognizes and removes damaged bases. Has a preference for oxidized pyrimidines, such as thymine glycol, formamidopyrimidine (Fapy) and 5-hydroxyuracil. Has marginal activity towards 8-oxoguanine. Has AP (apurinic/apyrimidinic) lyase activity and introduces nicks in the DNA strand. Cleaves the DNA backbone by beta-delta elimination to generate a single-strand break at the site of the removed base with both 3'- and 5'-phosphates. Has DNA glycosylase/lyase activity towards mismatched uracil and thymine, in particular in U:C and T:C mismatches. Specifically binds 5-hydroxymethylcytosine (5hmC), suggesting that it acts as a specific reader of 5hmC. The sequence is that of Endonuclease 8-like 1 (Neil1) from Mus musculus (Mouse).